The following is a 311-amino-acid chain: ATP synthase gamma chain (311 aa).

This sequence belongs to the ATPase gamma chain family. F-type ATPases have 2 components, CF(1) - the catalytic core - and CF(0) - the membrane proton channel. CF(1) has five subunits: alpha(3), beta(3), gamma(1), delta(1), epsilon(1). CF(0) has three main subunits: a, b and c.

The protein localises to the cell membrane. In terms of biological role, produces ATP from ADP in the presence of a proton gradient across the membrane. The gamma chain is believed to be important in regulating ATPase activity and the flow of protons through the CF(0) complex. This is ATP synthase gamma chain from Limosilactobacillus fermentum (strain NBRC 3956 / LMG 18251) (Lactobacillus fermentum).